Here is a 1955-residue protein sequence, read N- to C-terminus: Protocadherin-15 (1955 aa).

An N-terminal signal peptide occupies residues 1–26 (MFRQFYLWTCLASGIILGSLFEICLG). Residues 27-1376 (QYDDDCKLAR…GESLGYTEGA (1350 aa)) are Extracellular-facing. A disulfide bridge links cysteine 32 with cysteine 120. 11 consecutive Cadherin domains span residues 40-147 (PATI…SPTF), 148-265 (KHES…GPMF), 278-395 (RPLT…SPYF), 396-509 (TMPS…TPTF), 510-616 (PEIS…PPRF), 617-717 (PQLM…APVF), 719-819 (PYLP…SPVF), 820-926 (TNST…PPVF), 927-1035 (SKRI…IPRF), 1037-1144 (QEEY…PPVF), and 1145-1259 (QKKF…PPTL). Residues asparagine 52, asparagine 97, and asparagine 201 are each glycosylated (N-linked (GlcNAc...) asparagine). N-linked (GlcNAc...) asparagine glycans are attached at residues asparagine 419, asparagine 559, asparagine 662, asparagine 724, asparagine 768, asparagine 821, and asparagine 851. Residues asparagine 1064, asparagine 1084, and asparagine 1175 are each glycosylated (N-linked (GlcNAc...) asparagine). Residues 1377–1397 (LLALAFIIILCCIPAILVVLV) form a helical membrane-spanning segment. The Cytoplasmic portion of the chain corresponds to 1398–1955 (SYRQFKVRQA…KQSHSQSTSL (558 aa)). Positions 1426–1444 (VPAPAPVAAPPPPPPPPPG) are enriched in pro residues. Disordered regions lie at residues 1426 to 1446 (VPAP…PGAH), 1601 to 1623 (QGTR…GSSN), 1745 to 1766 (CPLP…APLA), and 1928 to 1955 (ITSE…STSL). Residues 1928–1941 (ITSEQNKGSLNNIV) show a composition bias toward polar residues.

Antiparallel heterodimer with CDH23. Found in a complex with TMIE and LHFPL5. Interacts with LHFPL5/TMHS; this interaction is required for efficient localization to hair bundles. Interacts with MYO7A. Interacts with USH1G; this interaction may recruit USH1G to the plasma membrane. Interacts with TOMT. Isoforms CD1 and CD3 interact with TMC1 (via N-terminus) and TMC2 (via N-terminus). Expressed in brain, lung, kidney, spleen and testis. Found also in the inner and outer synaptic layers, and the nerve fiber layer in adult and fetal retinas. Found in the supporting cells, outer sulcus cells and spiral ganglion of fetal cochlea. Expressed in cytotoxic tumor-derived T- and NK-cell lines as well as biopsies of nasal NK/T-cell lymphomas. Not detected in normal or in vitro activated peripheral blood cells, CD4 or CD8 lymphocytes or NK cells. Isoform 3 is expressed in brain, heart, cerebellum and kidney. CD1 isoforms, such as isoform 1, have a limited pattern of expression and is detected in testis, retina and cochlea. CD2 isoforms, such as isoforms 4 and 5, are expressed in heart, kidney, thymus, spleen, testis, retina and cochlea. CD3 isoforms, such as isoform 6, are widely expressed.

The protein resides in the cell membrane. It localises to the secreted. Calcium-dependent cell-adhesion protein. Essential for maintenance of normal retinal and cochlear function. This Homo sapiens (Human) protein is Protocadherin-15 (PCDH15).